Consider the following 106-residue polypeptide: Large ribosomal subunit protein eL42 (106 aa).

Residues 36–56 (FAQGKRRYDRKQSGYGGQTKP) are disordered.

It belongs to the eukaryotic ribosomal protein eL42 family.

This is Large ribosomal subunit protein eL42 (RPL44) from Coprinopsis cinerea (strain Okayama-7 / 130 / ATCC MYA-4618 / FGSC 9003) (Inky cap fungus).